Consider the following 476-residue polypeptide: Serine protease HTRA4 (476 aa).

A signal peptide spans 1–31 (MIRPQLRTAGLGRCLLPGLLLLLVPVLWAGA). Residues 36–109 (TQPSCPAVCQ…PGFPSTCGCP (74 aa)) form the IGFBP N-terminal domain. Cystine bridges form between cysteine 40/cysteine 66, cysteine 44/cysteine 68, cysteine 49/cysteine 69, cysteine 55/cysteine 72, cysteine 80/cysteine 94, cysteine 88/cysteine 106, cysteine 108/cysteine 127, and cysteine 116/cysteine 152. The Kazal-like domain occupies 88–154 (CAPGLQCLQP…VPVQWGNCGD (67 aa)). The tract at residues 202–362 (GSGFIVSEDG…IPSDRVRQFL (161 aa)) is serine protease. Active-site charge relay system residues include histidine 218, aspartate 248, and serine 326. Residues 383–474 (LQMLSLTVPL…NLLLTVIPET (92 aa)) form the PDZ domain.

This sequence belongs to the peptidase S1C family.

It localises to the secreted. In terms of biological role, serine protease. In Homo sapiens (Human), this protein is Serine protease HTRA4 (HTRA4).